An 898-amino-acid polypeptide reads, in one-letter code: Endoplasmic reticulum metallopeptidase 1 (898 aa).

The residue at position 1 (Met-1) is an N-acetylmethionine. Residues 1-59 (MEWSSESAAVRRHRGTAERREGQAAASHPQREASAQEDARGGGRMRGRTESGGESRGAK) are disordered. Topologically, residues 1–66 (MEWSSESAAV…GAKTALSEAR (66 aa)) are cytoplasmic. Residues 37 to 57 (EDARGGGRMRGRTESGGESRG) show a composition bias toward basic and acidic residues. Residues 67–87 (TALALALYLLALRALVQLSLQ) form a helical membrane-spanning segment. Over 88–393 (RLVLSRTSGL…SSSEYRHGSM (306 aa)) the chain is Lumenal. N-linked (GlcNAc...) asparagine glycosylation is present at Asn-176. An intrachain disulfide couples Cys-198 to Cys-216. Zn(2+) contacts are provided by His-199 and Asp-211. Catalysis depends on Glu-245, which acts as the Proton acceptor. Residues Glu-246, Glu-272, and His-348 each coordinate Zn(2+). A helical transmembrane segment spans residues 394–414 (VFFDVLGLLVIAYPSRVGSII). The Cytoplasmic segment spans residues 415–451 (NYMVVMAVVLYLGRKLLRPNHSNSNYVRDFLCGLGIT). A helical membrane pass occupies residues 452-472 (FISWFTSLVTVLIIAVFVSLI). Topologically, residues 473-480 (GQSLSWYN) are lumenal. Residues 481-501 (YFYIAVCLYGTATVAKIILIH) traverse the membrane as a helical segment. Residues 502–515 (TLAKRFYYVNASDL) are Cytoplasmic-facing. Residues 516–538 (YLGELFFDTSLFVHCGFLVALTA) form a helical membrane-spanning segment. Over 539-542 (QGFC) the chain is Lumenal. The chain crosses the membrane as a helical span at residues 543–562 (SAFMSAVWVAFPLLTKLCVY). The Cytoplasmic segment spans residues 563–573 (KDFKKHGAKGR). The helical transmembrane segment at 574 to 594 (FIALYLLGMFIPYLYGLYLIW) threads the bilayer. Residues 595–615 (AVFEMFTPILGRSGSEIPPDV) are Lumenal-facing. The helical transmembrane segment at 616 to 636 (VLASILAVCVMILSSYFITFI) threads the bilayer. The Cytoplasmic segment spans residues 637–645 (YLVNSTKKT). The helical transmembrane segment at 646 to 666 (ILTLILVCAVTFLLVCSGAFF) threads the bilayer. Over 667-898 (PYSSNPDSPK…WVSTYSLFVF (232 aa)) the chain is Lumenal. A glycan (N-linked (GlcNAc...) asparagine) is linked at Asn-724.

Belongs to the peptidase M28 family. It depends on Zn(2+) as a cofactor. As to expression, widely expressed, with highest levels in ovary, kidney, hypothalamus and hippocampus. Within the ovarian follicle, expressed in granulosa cells, but not in oocytes. Present in both preantral and antral follicles, but not in atretic antral follicle.

It localises to the endoplasmic reticulum membrane. In terms of biological role, within the ovary, required for the organization of somatic cells and oocytes into discrete follicular structures. The chain is Endoplasmic reticulum metallopeptidase 1 from Rattus norvegicus (Rat).